The primary structure comprises 66 residues: Small ribosomal subunit protein eS30 (66 aa).

The tract at residues 1–35 is disordered; sequence MGKVHGGLNRAGKVRNATPKKDKEEKRKPKVGRAK.

The protein belongs to the eukaryotic ribosomal protein eS30 family.

This chain is Small ribosomal subunit protein eS30 (rps30-1), found in Dictyostelium discoideum (Social amoeba).